Here is a 219-residue protein sequence, read N- to C-terminus: Octanoyltransferase (219 aa).

Residues Glu31–Leu219 form the BPL/LPL catalytic domain. Residues Arg69 to His76, Ser153 to Gly155, and Gly166 to Ala168 each bind substrate. Catalysis depends on Cys184, which acts as the Acyl-thioester intermediate.

The protein belongs to the LipB family.

The protein resides in the cytoplasm. It catalyses the reaction octanoyl-[ACP] + L-lysyl-[protein] = N(6)-octanoyl-L-lysyl-[protein] + holo-[ACP] + H(+). Its pathway is protein modification; protein lipoylation via endogenous pathway; protein N(6)-(lipoyl)lysine from octanoyl-[acyl-carrier-protein]: step 1/2. Functionally, catalyzes the transfer of endogenously produced octanoic acid from octanoyl-acyl-carrier-protein onto the lipoyl domains of lipoate-dependent enzymes. Lipoyl-ACP can also act as a substrate although octanoyl-ACP is likely to be the physiological substrate. The protein is Octanoyltransferase of Bdellovibrio bacteriovorus (strain ATCC 15356 / DSM 50701 / NCIMB 9529 / HD100).